We begin with the raw amino-acid sequence, 246 residues long: Probable transcriptional regulatory protein YebC (246 aa).

Positions M1–K20 are disordered.

The protein belongs to the TACO1 family.

The protein resides in the cytoplasm. The polypeptide is Probable transcriptional regulatory protein YebC (Salmonella choleraesuis (strain SC-B67)).